Reading from the N-terminus, the 348-residue chain is Phospho-2-dehydro-3-deoxyheptonate aldolase, Trp-sensitive (348 aa).

The protein belongs to the class-I DAHP synthase family.

The catalysed reaction is D-erythrose 4-phosphate + phosphoenolpyruvate + H2O = 7-phospho-2-dehydro-3-deoxy-D-arabino-heptonate + phosphate. The protein operates within metabolic intermediate biosynthesis; chorismate biosynthesis; chorismate from D-erythrose 4-phosphate and phosphoenolpyruvate: step 1/7. Stereospecific condensation of phosphoenolpyruvate (PEP) and D-erythrose-4-phosphate (E4P) giving rise to 3-deoxy-D-arabino-heptulosonate-7-phosphate (DAHP). The sequence is that of Phospho-2-dehydro-3-deoxyheptonate aldolase, Trp-sensitive (aroH) from Escherichia coli O157:H7.